The sequence spans 249 residues: Ubiquinone biosynthesis O-methyltransferase (249 aa).

Residues arginine 41, glycine 72, aspartate 93, and methionine 136 each coordinate S-adenosyl-L-methionine.

Belongs to the methyltransferase superfamily. UbiG/COQ3 family.

The enzyme catalyses a 3-demethylubiquinol + S-adenosyl-L-methionine = a ubiquinol + S-adenosyl-L-homocysteine + H(+). The catalysed reaction is a 3-(all-trans-polyprenyl)benzene-1,2-diol + S-adenosyl-L-methionine = a 2-methoxy-6-(all-trans-polyprenyl)phenol + S-adenosyl-L-homocysteine + H(+). Its pathway is cofactor biosynthesis; ubiquinone biosynthesis. Its function is as follows. O-methyltransferase that catalyzes the 2 O-methylation steps in the ubiquinone biosynthetic pathway. The protein is Ubiquinone biosynthesis O-methyltransferase of Methylobacterium nodulans (strain LMG 21967 / CNCM I-2342 / ORS 2060).